The chain runs to 940 residues: Phosphoenolpyruvate carboxylase (940 aa).

Catalysis depends on residues H138 and K603.

This sequence belongs to the PEPCase type 1 family. Mg(2+) serves as cofactor.

It catalyses the reaction oxaloacetate + phosphate = phosphoenolpyruvate + hydrogencarbonate. Functionally, forms oxaloacetate, a four-carbon dicarboxylic acid source for the tricarboxylic acid cycle. The sequence is that of Phosphoenolpyruvate carboxylase from Streptococcus thermophilus (strain ATCC BAA-491 / LMD-9).